A 53-amino-acid chain; its full sequence is Large ribosomal subunit protein bL32c (53 aa).

Positions 1–21 (MAVPKKRTSKSKKKSRRSHWI) are disordered.

This sequence belongs to the bacterial ribosomal protein bL32 family.

Its subcellular location is the plastid. The protein resides in the chloroplast. The polypeptide is Large ribosomal subunit protein bL32c (rpl32) (Cyanidium caldarium (Red alga)).